Consider the following 405-residue polypeptide: Magnesium-protoporphyrin IX monomethyl ester [oxidative] cyclase, chloroplastic (405 aa).

The N-terminal 43 residues, 1–43 (MATEMALVKPISKFSTSSPIFSNSRYGKFTTVRMSSTSQSTTK), are a transit peptide targeting the chloroplast.

The protein belongs to the AcsF family. Fe cation is required as a cofactor.

Its subcellular location is the plastid. It is found in the chloroplast. The catalysed reaction is Mg-protoporphyrin IX 13-monomethyl ester + 3 NADPH + 3 O2 + 2 H(+) = 3,8-divinyl protochlorophyllide a + 3 NADP(+) + 5 H2O. Its pathway is porphyrin-containing compound metabolism; chlorophyll biosynthesis. Functionally, catalyzes the formation of the isocyclic ring in chlorophyll biosynthesis. Mediates the cyclase reaction, which results in the formation of divinylprotochlorophyllide (Pchlide) characteristic of all chlorophylls from magnesium-protoporphyrin IX 13-monomethyl ester (MgPMME). The chain is Magnesium-protoporphyrin IX monomethyl ester [oxidative] cyclase, chloroplastic (CRD1) from Gossypium hirsutum (Upland cotton).